We begin with the raw amino-acid sequence, 442 residues long: uncharacterized protein (442 aa).

The N-terminal stretch at 1-23 (MEILLIVLGAVVAGLLCPVQTAA) is a signal peptide. Disordered stretches follow at residues 36-67 (TSIS…NSSD) and 91-115 (ANET…TNTR). The span at 48-67 (TSSGELSQSTFSSSSTNSSD) shows a compositional bias: low complexity. N-linked (GlcNAc...) asparagine glycans are attached at residues Asn64, Asn92, Asn99, Asn130, Asn174, Asn225, Asn244, Asn346, Asn363, Asn386, and Asn398.

Its subcellular location is the secreted. This is an uncharacterized protein from Arthroderma benhamiae (strain ATCC MYA-4681 / CBS 112371) (Trichophyton mentagrophytes).